We begin with the raw amino-acid sequence, 428 residues long: Histone deacetylase 3 (428 aa).

A histone deacetylase region spans residues 3–316 (NRTSYFYDPD…WTFETSLLLE (314 aa)). The 1D-myo-inositol 1,4,5,6-tetrakisphosphate site is built by H17, G21, and K25. H135 is an active-site residue. Zn(2+)-binding residues include D170, H172, and D259. R265 lines the 1D-myo-inositol 1,4,5,6-tetrakisphosphate pocket. The tract at residues 385–428 (LNYERNDEPDPDERGAEENYTRPEAANEFYDGDHDNDKESDVEI) is disordered. Composition is skewed to basic and acidic residues over residues 386–405 (NYERNDEPDPDERGAEENYT) and 415–428 (DGDHDNDKESDVEI).

It belongs to the histone deacetylase family. HD type 1 subfamily.

The protein resides in the nucleus. Its subcellular location is the chromosome. It localises to the cytoplasm. It is found in the cytosol. It carries out the reaction N(6)-acetyl-L-lysyl-[histone] + H2O = L-lysyl-[histone] + acetate. With respect to regulation, inositol tetraphosphate (1D-myo-inositol 1,4,5,6-tetrakisphosphate) promotes the histone deacetylase activity by acting as an intermolecular glue between hdac3 and N-Cor repressor complex components. In terms of biological role, responsible for the deacetylation of lysine residues on the N-terminal part of the core histones (H2A, H2B, H3 and H4). Histone deacetylation gives a tag for epigenetic repression and plays an important role in transcriptional regulation, cell cycle progression and developmental events. Histone deacetylases act via the formation of large multiprotein complexes, such as N-Cor repressor complex, which activate the histone deacetylase activity. May play a role in the regulation of the circadian clock in a deacetylase activity-independent manner. The chain is Histone deacetylase 3 (hdac3) from Tetraodon nigroviridis (Spotted green pufferfish).